Reading from the N-terminus, the 146-residue chain is Cytidine deaminase (146 aa).

In terms of domain architecture, CMP/dCMP-type deaminase spans Glu-13 to Glu-140. Asn-54–Tyr-60 provides a ligand contact to substrate. Cys-65 lines the Zn(2+) pocket. The active-site Proton donor is the Glu-67. Residues Cys-99 and Cys-102 each coordinate Zn(2+).

It belongs to the cytidine and deoxycytidylate deaminase family. As to quaternary structure, homotetramer. The cofactor is Zn(2+). Highly expressed in granulocytes while expression is very low in fibroblasts, chondrocytes, monocytes, and T- as well as B-cell lines.

It carries out the reaction cytidine + H2O + H(+) = uridine + NH4(+). The enzyme catalyses 2'-deoxycytidine + H2O + H(+) = 2'-deoxyuridine + NH4(+). Its function is as follows. This enzyme scavenges exogenous and endogenous cytidine and 2'-deoxycytidine for UMP synthesis. This chain is Cytidine deaminase, found in Homo sapiens (Human).